The primary structure comprises 636 residues: 1-deoxy-D-xylulose-5-phosphate synthase (636 aa).

Thiamine diphosphate-binding positions include H72 and G113 to A115. Mg(2+) is bound at residue D144. Thiamine diphosphate is bound by residues G145–A146, N174, Y287, and E370. N174 provides a ligand contact to Mg(2+).

The protein belongs to the transketolase family. DXPS subfamily. Homodimer. Requires Mg(2+) as cofactor. Thiamine diphosphate serves as cofactor.

It carries out the reaction D-glyceraldehyde 3-phosphate + pyruvate + H(+) = 1-deoxy-D-xylulose 5-phosphate + CO2. It functions in the pathway metabolic intermediate biosynthesis; 1-deoxy-D-xylulose 5-phosphate biosynthesis; 1-deoxy-D-xylulose 5-phosphate from D-glyceraldehyde 3-phosphate and pyruvate: step 1/1. Its function is as follows. Catalyzes the acyloin condensation reaction between C atoms 2 and 3 of pyruvate and glyceraldehyde 3-phosphate to yield 1-deoxy-D-xylulose-5-phosphate (DXP). The protein is 1-deoxy-D-xylulose-5-phosphate synthase of Rippkaea orientalis (strain PCC 8801 / RF-1) (Cyanothece sp. (strain PCC 8801)).